The chain runs to 331 residues: Ferrochelatase (331 aa).

Fe cation contacts are provided by His-187 and Glu-286.

Belongs to the ferrochelatase family.

Its subcellular location is the cytoplasm. The enzyme catalyses heme b + 2 H(+) = protoporphyrin IX + Fe(2+). Its pathway is porphyrin-containing compound metabolism; protoheme biosynthesis; protoheme from protoporphyrin-IX: step 1/1. Its function is as follows. Catalyzes the ferrous insertion into protoporphyrin IX. In Legionella pneumophila (strain Corby), this protein is Ferrochelatase.